A 255-amino-acid polypeptide reads, in one-letter code: tRNA (guanine-N(1)-)-methyltransferase (255 aa).

S-adenosyl-L-methionine is bound by residues G113 and 133-138; that span reads IGDYVL.

This sequence belongs to the RNA methyltransferase TrmD family. Homodimer.

The protein localises to the cytoplasm. It catalyses the reaction guanosine(37) in tRNA + S-adenosyl-L-methionine = N(1)-methylguanosine(37) in tRNA + S-adenosyl-L-homocysteine + H(+). Specifically methylates guanosine-37 in various tRNAs. The chain is tRNA (guanine-N(1)-)-methyltransferase from Shigella flexneri serotype 5b (strain 8401).